The sequence spans 592 residues: UvrABC system protein C (592 aa).

A GIY-YIG domain is found at 15–92; the sequence is ALPGCYLMKD…IQKHQPYFNI (78 aa). A UVR domain is found at 197 to 232; the sequence is DNVKKDLTEKMATAAQEMQFERAAELRDQLRYIEAT.

This sequence belongs to the UvrC family. As to quaternary structure, interacts with UvrB in an incision complex.

It is found in the cytoplasm. The UvrABC repair system catalyzes the recognition and processing of DNA lesions. UvrC both incises the 5' and 3' sides of the lesion. The N-terminal half is responsible for the 3' incision and the C-terminal half is responsible for the 5' incision. The sequence is that of UvrABC system protein C from Latilactobacillus sakei subsp. sakei (strain 23K) (Lactobacillus sakei subsp. sakei).